Consider the following 443-residue polypeptide: ATP-dependent protease ATPase subunit HslU (443 aa).

ATP-binding positions include I20, 62–67, D255, E321, and R393; that span reads GVGKTE.

This sequence belongs to the ClpX chaperone family. HslU subfamily. In terms of assembly, a double ring-shaped homohexamer of HslV is capped on each side by a ring-shaped HslU homohexamer. The assembly of the HslU/HslV complex is dependent on binding of ATP.

The protein resides in the cytoplasm. ATPase subunit of a proteasome-like degradation complex; this subunit has chaperone activity. The binding of ATP and its subsequent hydrolysis by HslU are essential for unfolding of protein substrates subsequently hydrolyzed by HslV. HslU recognizes the N-terminal part of its protein substrates and unfolds these before they are guided to HslV for hydrolysis. The sequence is that of ATP-dependent protease ATPase subunit HslU from Helicobacter acinonychis (strain Sheeba).